Here is a 178-residue protein sequence, read N- to C-terminus: Endoribonuclease YbeY (178 aa).

His118, His122, and His128 together coordinate Zn(2+).

Belongs to the endoribonuclease YbeY family. It depends on Zn(2+) as a cofactor.

Its subcellular location is the cytoplasm. Its function is as follows. Single strand-specific metallo-endoribonuclease involved in late-stage 70S ribosome quality control and in maturation of the 3' terminus of the 16S rRNA. The chain is Endoribonuclease YbeY from Mycobacterium leprae (strain Br4923).